The sequence spans 683 residues: UvrABC system protein B (683 aa).

Residues M1–D29 form a disordered region. The Helicase ATP-binding domain occupies A39 to E417. G52–T59 contributes to the ATP binding site. A Beta-hairpin motif is present at residues Y105 to I128. The Helicase C-terminal domain maps to Q442–S604. Basic and acidic residues predominate over residues E587–V603. The interval E587–D620 is disordered. The segment covering S604–T615 has biased composition (polar residues). The UVR domain maps to E630–T665.

It belongs to the UvrB family. In terms of assembly, forms a heterotetramer with UvrA during the search for lesions. Interacts with UvrC in an incision complex.

It localises to the cytoplasm. Its function is as follows. The UvrABC repair system catalyzes the recognition and processing of DNA lesions. A damage recognition complex composed of 2 UvrA and 2 UvrB subunits scans DNA for abnormalities. Upon binding of the UvrA(2)B(2) complex to a putative damaged site, the DNA wraps around one UvrB monomer. DNA wrap is dependent on ATP binding by UvrB and probably causes local melting of the DNA helix, facilitating insertion of UvrB beta-hairpin between the DNA strands. Then UvrB probes one DNA strand for the presence of a lesion. If a lesion is found the UvrA subunits dissociate and the UvrB-DNA preincision complex is formed. This complex is subsequently bound by UvrC and the second UvrB is released. If no lesion is found, the DNA wraps around the other UvrB subunit that will check the other stand for damage. In Natronomonas pharaonis (strain ATCC 35678 / DSM 2160 / CIP 103997 / JCM 8858 / NBRC 14720 / NCIMB 2260 / Gabara) (Halobacterium pharaonis), this protein is UvrABC system protein B.